Here is a 283-residue protein sequence, read N- to C-terminus: Pantothenate synthetase (283 aa).

30–37 (MGYLHEGH) is a binding site for ATP. His37 (proton donor) is an active-site residue. Gln61 contacts (R)-pantoate. Gln61 contributes to the beta-alanine binding site. 147 to 150 (GLKD) provides a ligand contact to ATP. Gln153 is a binding site for (R)-pantoate. ATP contacts are provided by residues Val176 and 184–187 (KSSR).

This sequence belongs to the pantothenate synthetase family. In terms of assembly, homodimer.

It is found in the cytoplasm. It catalyses the reaction (R)-pantoate + beta-alanine + ATP = (R)-pantothenate + AMP + diphosphate + H(+). It functions in the pathway cofactor biosynthesis; (R)-pantothenate biosynthesis; (R)-pantothenate from (R)-pantoate and beta-alanine: step 1/1. Its function is as follows. Catalyzes the condensation of pantoate with beta-alanine in an ATP-dependent reaction via a pantoyl-adenylate intermediate. This Halalkalibacterium halodurans (strain ATCC BAA-125 / DSM 18197 / FERM 7344 / JCM 9153 / C-125) (Bacillus halodurans) protein is Pantothenate synthetase.